The sequence spans 283 residues: MNDSQRVSILSEALPYIQSFSGRKIVIKYGGSVMENDNLKNAFFRDIALLSTVGVCPIVIHGGGPEINNWLRKLEISPKFENGLRITDQKTMEIVEMVLMGRVNKEIVKGINKTGSLAVGISGLDGNLIQSRELGDGSHGLVGEVTKINPEILDPLISKGYIPIISSIGSTLEGISHNINADFVAGEIAAAINAEKLILLTDTQGILKEKDDKNSLVAKTNLKEARDFIDKKIVTAGMIPKTECCIRALAQGVKAAHIIDGQIEHSLLLEIFTNSGIGTMIVA.

Residues 63–64 (GG), R85, and N178 contribute to the substrate site.

The protein belongs to the acetylglutamate kinase family. ArgB subfamily.

It localises to the cytoplasm. It carries out the reaction N-acetyl-L-glutamate + ATP = N-acetyl-L-glutamyl 5-phosphate + ADP. The protein operates within amino-acid biosynthesis; L-arginine biosynthesis; N(2)-acetyl-L-ornithine from L-glutamate: step 2/4. In terms of biological role, catalyzes the ATP-dependent phosphorylation of N-acetyl-L-glutamate. This is Acetylglutamate kinase from Prochlorococcus marinus (strain AS9601).